A 100-amino-acid chain; its full sequence is Urease subunit gamma (100 aa).

This sequence belongs to the urease gamma subunit family. Heterotrimer of UreA (gamma), UreB (beta) and UreC (alpha) subunits. Three heterotrimers associate to form the active enzyme.

It localises to the cytoplasm. The catalysed reaction is urea + 2 H2O + H(+) = hydrogencarbonate + 2 NH4(+). It participates in nitrogen metabolism; urea degradation; CO(2) and NH(3) from urea (urease route): step 1/1. The polypeptide is Urease subunit gamma (Saccharophagus degradans (strain 2-40 / ATCC 43961 / DSM 17024)).